The sequence spans 253 residues: Tyrosine recombinase XerD-like (253 aa).

In terms of domain architecture, Core-binding (CB) spans 8-81; the sequence is KQLTTQITNF…AVNQFLLYLY (74 aa). One can recognise a Tyr recombinase domain in the interval 93-253; the sequence is SETAPLPSQQ…PVTLEKYYKT (161 aa). Active-site residues include Lys157 and Arg218. The active-site O-(3'-phospho-DNA)-tyrosine intermediate is Tyr250.

It belongs to the 'phage' integrase family. XerD-like subfamily.

The protein resides in the cytoplasm. In terms of biological role, putative tyrosine recombinase. Not involved in the cutting and rejoining of the recombining DNA molecules on dif(SL) site. The protein is Tyrosine recombinase XerD-like of Streptococcus thermophilus (strain CNRZ 1066).